We begin with the raw amino-acid sequence, 324 residues long: Arginase (324 aa).

Residues H115, D142, H144, and D146 each coordinate Mn(2+). Residues 144–148, 155–157, and D196 each bind substrate; these read HTDLH and SGN. Mn(2+) contacts are provided by D244 and D246. T258 and E289 together coordinate substrate.

This sequence belongs to the arginase family. As to quaternary structure, homohexamer. Requires Mn(2+) as cofactor.

The enzyme catalyses L-arginine + H2O = urea + L-ornithine. The protein operates within nitrogen metabolism; urea cycle; L-ornithine and urea from L-arginine: step 1/1. This chain is Arginase (arcA), found in Agrobacterium fabrum (strain C58 / ATCC 33970) (Agrobacterium tumefaciens (strain C58)).